A 338-amino-acid polypeptide reads, in one-letter code: tRNA N6-adenosine threonylcarbamoyltransferase (338 aa).

The Fe cation site is built by histidine 111 and histidine 115. Substrate-binding positions include 134-138 (LVSGG), aspartate 167, glycine 180, and asparagine 272. Aspartate 300 is a Fe cation binding site.

It belongs to the KAE1 / TsaD family. It depends on Fe(2+) as a cofactor.

Its subcellular location is the cytoplasm. The enzyme catalyses L-threonylcarbamoyladenylate + adenosine(37) in tRNA = N(6)-L-threonylcarbamoyladenosine(37) in tRNA + AMP + H(+). Required for the formation of a threonylcarbamoyl group on adenosine at position 37 (t(6)A37) in tRNAs that read codons beginning with adenine. Is involved in the transfer of the threonylcarbamoyl moiety of threonylcarbamoyl-AMP (TC-AMP) to the N6 group of A37, together with TsaE and TsaB. TsaD likely plays a direct catalytic role in this reaction. The polypeptide is tRNA N6-adenosine threonylcarbamoyltransferase (Shewanella sp. (strain ANA-3)).